A 724-amino-acid polypeptide reads, in one-letter code: Membrane protein YdfJ (724 aa).

Helical transmembrane passes span 17-37 (IKAICAWIVVLVAAIGLAVTL), 179-199 (IVGIILAFVVLAITFGSLLIA), 200-220 (GLPILTALIGLGVSIGLVLIG), 231-251 (LSLAGMIGLAVGIDYALFIFT), 277-297 (AVVFAGLTVIVALCGLTVVNI), 309-329 (LSVLMAVLASITLVPAVLSIA), 360-380 (IMLSVCSILILIVISIPSMHL), 512-532 (AIPVFAVLIVGFAFVLLTIVF), 539-559 (LVAVAGFMLTMTATLGICVFV), 575-595 (GPILAFLPILSIGILFGLAMD), 627-647 (PVVTAAGLIMIFVFAGFIFAG), and 655-675 (GLALSFGVLFDAFIVRMTLIP).

This sequence belongs to the resistance-nodulation-cell division (RND) (TC 2.A.6) family. MmpL subfamily.

The protein localises to the cell membrane. This chain is Membrane protein YdfJ (ydfJ), found in Bacillus subtilis (strain 168).